The primary structure comprises 74 residues: Arabinogalactan protein 20 (74 aa).

The first 26 residues, 1–26, serve as a signal peptide directing secretion; that stretch reads MASRNSVAVIALFAFVFAVISPFAGA. Gln-27 is subject to Pyrrolidone carboxylic acid. A 4-hydroxyproline mark is found at Pro-31, Pro-33, and Pro-35. Residues Pro-31, Pro-33, and Pro-35 are each glycosylated (O-linked (Ara...) hydroxyproline). Ser-37 carries the GPI-anchor amidated serine lipid modification. Residues 38-74 constitute a propeptide, removed in mature form; it reads DGTSIDQGIAYLLMVVALVLTYLIHPLDASSSSYTFF.

This sequence belongs to the AG-peptide AGP family. Contains 4-hydroxyproline; hydroxylated on Pro-31, Pro-33 and Pro-35. Post-translationally, O-glycosylated on hydroxyprolines; noncontiguous hydroxylproline residues are glycosylated with arabinogalactan.

It is found in the cell membrane. Proteoglycan that seems to be implicated in diverse developmental roles such as differentiation, cell-cell recognition, embryogenesis and programmed cell death. The chain is Arabinogalactan protein 20 from Arabidopsis thaliana (Mouse-ear cress).